A 41-amino-acid polypeptide reads, in one-letter code: Large ribosomal subunit protein bL32c (41 aa).

The protein belongs to the bacterial ribosomal protein bL32 family.

Its subcellular location is the plastid. The polypeptide is Large ribosomal subunit protein bL32c (rpl32) (Helicosporidium sp. subsp. Simulium jonesii (Green alga)).